The following is a 310-amino-acid chain: uncharacterized protein (310 aa).

Helical transmembrane passes span 1 to 21, 38 to 58, 74 to 94, 110 to 130, 135 to 155, 194 to 214, 228 to 248, 256 to 276, and 284 to 304; these read MIYFFISSLFFLILITLMFSK, FFFYFLLFVLFIFIFWLVVYT, TSYFLEILLSIDNVFAWFFIF, YGLWGALILRSIFSFSGSFLF, WILYLFGGFFILTSLKFIFFS, IFITPLFVSLILIELSDIVFS, LFIIFSSNFFAVLGLRSMYLF, FPIMKYALSLILMFIGFKILI, and IFLTLAVILIILITTFLINLI.

The protein belongs to the TerC family.

Its subcellular location is the cell membrane. This is an uncharacterized protein from Buchnera aphidicola subsp. Schizaphis graminum (strain Sg).